A 486-amino-acid polypeptide reads, in one-letter code: Wax ester synthase/diacylglycerol acyltransferase 11 (486 aa).

At 1 to 192 the chain is on the cytoplasmic side; sequence MGEDKKTARE…CNSGFFNKIW (192 aa). His-144 functions as the Proton acceptor in the catalytic mechanism. Residues 193–213 form a helical membrane-spanning segment; it reads WLFVGLWFILRLLFNTFVDIL. The Extracellular portion of the chain corresponds to 214–486; sequence MFALTIFVLR…LERGLYEIEV (273 aa).

It in the N-terminal section; belongs to the long-chain O-acyltransferase family. As to expression, mostly expressed in inflorescences and flowers, especially at the periphery of petal epidermal cells.

The protein resides in the cell membrane. The protein localises to the endoplasmic reticulum membrane. The catalysed reaction is an acyl-CoA + a 1,2-diacyl-sn-glycerol = a triacyl-sn-glycerol + CoA. The enzyme catalyses a long chain fatty alcohol + a fatty acyl-CoA = a wax ester + CoA. It participates in glycerolipid metabolism; triacylglycerol biosynthesis. It functions in the pathway lipid metabolism. Bifunctional wax ester synthase/diacylglycerol acyltransferase. Involved in cuticular wax biosynthesis. Required for petals development, probably by mediating the production of fatty acids at the plasma membrane in the petal epidermis acting as lubricants that makes petal elongation smooth in narrow space between the sepals and the anthers inside floral buds. In Arabidopsis thaliana (Mouse-ear cress), this protein is Wax ester synthase/diacylglycerol acyltransferase 11.